A 227-amino-acid chain; its full sequence is Albumin-2 (227 aa).

Hemopexin repeat units lie at residues 3-46 (PGYI…GPTP), 61-111 (SYGI…FPFF), 117-165 (ESGI…YPCF), and 171-221 (ESGA…WPSL). Residues Asn-7 and Asp-65 each contribute to the Ca(2+) site. Ser-118 provides a ligand contact to spermine. Positions 121 and 175 each coordinate Ca(2+).

As to quaternary structure, monomer and homodimer. Dimers are prevalent in solution.

The protein resides in the cytoplasm. Its subcellular location is the cytosol. Its function is as follows. May play a role in response to oxidative stress and polyamine biosynthesis. The monomeric form binds one hemin per monomer. In the dimeric form, about half of the dimers bind one molecule of spermine each under physiological conditions. Ligand binding is mutually exclusive as binding of hemin leads to dissociation of the dimer. The protein is Albumin-2 of Lathyrus sativus (White vetchling).